A 717-amino-acid chain; its full sequence is Polyribonucleotide nucleotidyltransferase (717 aa).

Residues aspartate 486 and aspartate 492 each contribute to the Mg(2+) site. Residues 553-612 (PKIIQLQIDIDKISLVIGSTGKTVKAITDEFEVRVQIEQDGRITLFGTDSLKMQKAKARI) enclose the KH domain. One can recognise an S1 motif domain in the interval 622-715 (GEIYEGVVKK…KFGKIELELV (94 aa)). The interval 650–683 (SNRPKSRDDRYGDMRHSRYGSGRHSRYGRDSRNT) is disordered. Residues 654–665 (KSRDDRYGDMRH) show a composition bias toward basic and acidic residues. The span at 666 to 675 (SRYGSGRHSR) shows a compositional bias: basic residues.

Belongs to the polyribonucleotide nucleotidyltransferase family. Requires Mg(2+) as cofactor.

It localises to the cytoplasm. It catalyses the reaction RNA(n+1) + phosphate = RNA(n) + a ribonucleoside 5'-diphosphate. Involved in mRNA degradation. Catalyzes the phosphorolysis of single-stranded polyribonucleotides processively in the 3'- to 5'-direction. This Borrelia turicatae (strain 91E135) protein is Polyribonucleotide nucleotidyltransferase.